We begin with the raw amino-acid sequence, 221 residues long: tRNA (guanine-N(7)-)-methyltransferase (221 aa).

4 residues coordinate S-adenosyl-L-methionine: Glu-51, Glu-76, Asp-103, and Asp-125. Asp-125 is a catalytic residue. Positions 129 and 161 each coordinate substrate.

It belongs to the class I-like SAM-binding methyltransferase superfamily. TrmB family.

It catalyses the reaction guanosine(46) in tRNA + S-adenosyl-L-methionine = N(7)-methylguanosine(46) in tRNA + S-adenosyl-L-homocysteine. It participates in tRNA modification; N(7)-methylguanine-tRNA biosynthesis. In terms of biological role, catalyzes the formation of N(7)-methylguanine at position 46 (m7G46) in tRNA. The polypeptide is tRNA (guanine-N(7)-)-methyltransferase (Wolbachia pipientis wMel).